An 851-amino-acid chain; its full sequence is B-box type zinc finger protein ncl-1 (851 aa).

A disordered region spans residues 71–91; sequence GFGFGSPSSTTSSSPPLSNSP. Residues 76 to 91 are compositionally biased toward low complexity; sequence SPSSTTSSSPPLSNSP. The segment at 127-174 adopts a B box-type 1; atypical zinc-finger fold; that stretch reads VPAVHCSGCKSNETATSFCQDCNANLCDNCTMAHKFMHCFADHRVVSL. Zn(2+)-binding residues include Cys132, Cys135, Cys156, and His160. Residues 176–197 show a composition bias toward low complexity; it reads TPGTGSSSSSTSSSSSASSTSS. Residues 176–211 form a disordered region; sequence TPGTGSSSSSTSSSSSASSTSSHQVPSLGGKQSPDS. The segment at 218-261 adopts a B box-type 2 zinc-finger fold; that stretch reads KRSVLCLQHRASELVFFCVSCNLAICRDCTVSDHPSGTHQYELI. Cys223, His226, Cys246, and His251 together coordinate Zn(2+). Positions 303–331 form a coiled coil; it reads SLHNAHAQLEETVSNLINVIQDQKKTLAK. NHL repeat units follow at residues 573-616, 620-665, 666-707, 708-750, and 751-794; these read HCKF…FDKE, KFQF…YNQY, GQFL…FDMF, GNIL…FSYE, and GQYL…FSQD.

Present in cells in which nucleoli are absent, and absent from large cells in which nucleoli are prominent. Highly expressed in the gonads.

The protein resides in the cytoplasm. In terms of biological role, translational repressor that inhibits protein synthesis. Represses the translation of mRNAs such as fib-1, probably by being recruited by RNA-binding protein nos-2 and the Pumilio proteins puf-5, puf-8 and puf-9 to the consensus core PUF binding motif in the 3'-UTR of fib-1 mRNA. Negatively regulates ribosomal RNA (rRNA) synthesis, ribosomal protein synthesis and nucleolus size. Its role in the negative regulation of nucleolus size is most likely through its negative regulation of the translation of proteins such as the rRNA 2'-O-methyltransferase fib-1, and dao-5. Might act directly as a transcription factor to inhibit RNA polymerase I (rRNA) and III (5S RNA) transcription. Plays a role in embryonic development, and in particular, is involved in regulating the localization of proteins, such as par-2, that are required for embryonic cell polarity. Plays a role in the regulation of lifespan, and the response to nutrient availability. The polypeptide is B-box type zinc finger protein ncl-1 (Caenorhabditis elegans).